The primary structure comprises 1181 residues: 1-phosphatidylinositol 4,5-bisphosphate phosphodiesterase beta-2 (1181 aa).

The PI-PLC X-box domain occupies 312-463 (QDMTQPLNHY…LRGKILIKNK (152 aa)). His-327 is a catalytic residue. Residues Asn-328, Glu-357, and Asp-359 each coordinate Ca(2+). The active site involves His-374. Residue Glu-408 participates in Ca(2+) binding. Positions 465-534 (NQFSGPASPS…EEIKKMQSDE (70 aa)) are disordered. The segment covering 503-525 (TEVEEEEVVEEEEEEESGNLDEE) has biased composition (acidic residues). In terms of domain architecture, PI-PLC Y-box spans 547-663 (MSSLVNYIQP…GYLLKHEFMR (117 aa)). The C2 domain occupies 666–791 (DKQFNPFSVD…CLRSESNMAL (126 aa)). Residues 847-890 (SGTPVASQSNGAPVSAGNGSTAPGTKATGEEATKEVTEPQTASL) form a disordered region. Residues 850-869 (PVASQSNGAPVSAGNGSTAP) are compositionally biased toward polar residues. Over residues 874-883 (TGEEATKEVT) the composition is skewed to basic and acidic residues. The stretch at 893–940 (LRELKGVVKLQRRHEKELRELERRGARRWEELLQRGAAQLAELQTQAA) forms a coiled coil. The residue at position 950 (Ser-950) is a Phosphoserine. Coiled coils occupy residues 974-1026 (PRVQ…AELK) and 1075-1141 (HIQE…VRAY). Positions 1149-1181 (EAEDKPERSCEASEESCPQEPLVSKADTQESRL) are disordered. Basic and acidic residues predominate over residues 1150–1159 (AEDKPERSCE).

Interacts with RAC1. Forms a complex composed of at least WDR26, a G-beta:gamma unit, and PLCB2. Ca(2+) serves as cofactor.

It catalyses the reaction a 1,2-diacyl-sn-glycero-3-phospho-(1D-myo-inositol-4,5-bisphosphate) + H2O = 1D-myo-inositol 1,4,5-trisphosphate + a 1,2-diacyl-sn-glycerol + H(+). The enzyme catalyses a 1,2-diacyl-sn-glycero-3-phospho-(1D-myo-inositol) + H2O = 1D-myo-inositol 1-phosphate + a 1,2-diacyl-sn-glycerol + H(+). Functionally, the production of the second messenger molecules diacylglycerol (DAG) and inositol 1,4,5-trisphosphate (IP3) is mediated by activated phosphatidylinositol-specific phospholipase C enzymes. In neutrophils, participates in a phospholipase C-activating N-formyl peptide-activated GPCR (G protein-coupled receptor) signaling pathway by promoting RASGRP4 activation by DAG, to promote neutrophil functional responses. This Mus musculus (Mouse) protein is 1-phosphatidylinositol 4,5-bisphosphate phosphodiesterase beta-2.